The primary structure comprises 257 residues: Acyl-[acyl-carrier-protein]--UDP-N-acetylglucosamine O-acyltransferase (257 aa).

It belongs to the transferase hexapeptide repeat family. LpxA subfamily. As to quaternary structure, homotrimer.

The protein resides in the cytoplasm. The enzyme catalyses a (3R)-hydroxyacyl-[ACP] + UDP-N-acetyl-alpha-D-glucosamine = a UDP-3-O-[(3R)-3-hydroxyacyl]-N-acetyl-alpha-D-glucosamine + holo-[ACP]. It functions in the pathway glycolipid biosynthesis; lipid IV(A) biosynthesis; lipid IV(A) from (3R)-3-hydroxytetradecanoyl-[acyl-carrier-protein] and UDP-N-acetyl-alpha-D-glucosamine: step 1/6. Its function is as follows. Involved in the biosynthesis of lipid A, a phosphorylated glycolipid that anchors the lipopolysaccharide to the outer membrane of the cell. The protein is Acyl-[acyl-carrier-protein]--UDP-N-acetylglucosamine O-acyltransferase of Fusobacterium nucleatum subsp. nucleatum (strain ATCC 25586 / DSM 15643 / BCRC 10681 / CIP 101130 / JCM 8532 / KCTC 2640 / LMG 13131 / VPI 4355).